The primary structure comprises 296 residues: Transcription factor Pur-alpha 1 (296 aa).

An N-acetylmethionine modification is found at M1. Disordered regions lie at residues 1–25 (MEANSGGGGGAEGGRAVTGGGGGGG) and 186–214 (IPGHGSQQPSSSEHNVDRTIDSPGQEETG). S207 carries the phosphoserine modification.

It belongs to the PUR DNA-binding protein family. In terms of assembly, homodimer. Interacts with TCP20.

It is found in the nucleus. Functionally, transcription factor that specifically binds the purine-rich double-stranded telomeric repeated sequence 5'-AAACCCTAA-3' found in promoter telo boxes. This is Transcription factor Pur-alpha 1 (PURA1) from Arabidopsis thaliana (Mouse-ear cress).